We begin with the raw amino-acid sequence, 1266 residues long: Intermembrane phospholipid transporter YhdP (1266 aa).

Topologically, residues 1–5 are cytoplasmic; that stretch reads MRRLP. Residues 6 to 26 traverse the membrane as a helical segment; that stretch reads GILLLTGAALVVIAALLVSGL. Residues 27–1266 are Periplasmic-facing; the sequence is RIALPHLDAW…LRQPRKEKAQ (1240 aa). The tract at residues 94 to 103 is P-helix; it reads VWQSLLHMRW. The segment at 1121–1144 is C-helix_2; it reads HAGQLLRLLSVDALMRKLRFDFRD. A C-helix_1 region spans residues 1203–1237; that stretch reads ISATVGVAAAFAVNPIVGAAVFAASKVLGPLWSKV.

Its subcellular location is the cell inner membrane. In terms of biological role, involved in outer membrane lipid homeostasis. Likely transports phospholipids between the inner membrane and the outer membrane. It would provide a bridge-like structure that protects phospholipids as they travel across the periplasm. The phosphate-containing molecules are captured along the length of a hydrophobic groove that is continuous along all but the extreme N-terminus of the protein. It also appears to control, directly or indirectly, levels of cyclic enterobacterial common antigen (cyclic ECA), a soluble cyclic ECA molecule present in the periplasm. TamB, YdbH and YhdP are redundant, but not equivalent, in performing an essential function for growth and maintaining lipid homeostasis in the outer membrane. The transport functions of TamB and YhdP could be differentiated according to the fatty acid saturation state of the phospholipids, with TamB transporting more unsaturated phospholipids and YhdP more saturated phospholipids. Any of these three proteins is sufficient for growth. This chain is Intermembrane phospholipid transporter YhdP (yhdP), found in Escherichia coli (strain K12).